We begin with the raw amino-acid sequence, 142 residues long: Small heat shock protein IbpB (142 aa).

Positions 26 to 137 (AGESQSFPPY…APQRIAISER (112 aa)) constitute a sHSP domain.

It belongs to the small heat shock protein (HSP20) family. As to quaternary structure, homodimer. Forms homomultimers of about 100-150 subunits at optimal growth temperatures. Conformation changes to oligomers at high temperatures or high ionic concentrations. The decrease in size of the multimers is accompanied by an increase in chaperone activity.

Its subcellular location is the cytoplasm. In terms of biological role, associates with aggregated proteins, together with IbpA, to stabilize and protect them from irreversible denaturation and extensive proteolysis during heat shock and oxidative stress. Aggregated proteins bound to the IbpAB complex are more efficiently refolded and reactivated by the ATP-dependent chaperone systems ClpB and DnaK/DnaJ/GrpE. Its activity is ATP-independent. The polypeptide is Small heat shock protein IbpB (Klebsiella pneumoniae subsp. pneumoniae (strain ATCC 700721 / MGH 78578)).